Consider the following 269-residue polypeptide: uncharacterized protein (269 aa).

To T.pallidum TP0678.

This is an uncharacterized protein from Borreliella burgdorferi (strain ATCC 35210 / DSM 4680 / CIP 102532 / B31) (Borrelia burgdorferi).